The sequence spans 406 residues: MTEEHRLISAESVTEGHPDKVCDQISDAILDDLLAQDSSSHVAVETSAATGVFLVFGEVTSEGYCDVQSKVRETLRNIGYTSSEVGLDADSCGVVVAITEQSAEINQGVARLTGDQETAASREERYEAQGAGDQGVMFGYATDETPTLMPLPIYLAHRLAFHLTEVRKSGEVPHLRPDGKTQVTIEYDDDDKPVRLDTVLISTQHDPEVTQDWLAVELKKHVIDPVLDEVLGSKVPHDNYRQLVNPTGSFILGGPAADAGLTGRKIIVDTYGGAAHHGGGAFSGKDPSKVDRSAAYATRWVAKNIVAAGLAHKVEIQIAYAIGVADPVSVNVETFGTEQGVTRGQIAAAVRKVFDLRPAAIIDELDLKRPIYLKTAAYGHFGRTDVEFPWEKTDKVEELKAAIAAE.

Residue His17 participates in ATP binding. Asp19 is a Mg(2+) binding site. Glu45 is a binding site for K(+). L-methionine-binding residues include Glu58 and Gln101. Positions 101-111 are flexible loop; that stretch reads QSAEINQGVAR. Residues 178–180, Asp258, 264–265, Ala281, and Lys285 contribute to the ATP site; these read DGK and RK. Asp258 contributes to the L-methionine binding site. L-methionine is bound at residue Lys289.

It belongs to the AdoMet synthase family. As to quaternary structure, homotetramer; dimer of dimers. The cofactor is Mg(2+). K(+) is required as a cofactor.

Its subcellular location is the cytoplasm. It carries out the reaction L-methionine + ATP + H2O = S-adenosyl-L-methionine + phosphate + diphosphate. The protein operates within amino-acid biosynthesis; S-adenosyl-L-methionine biosynthesis; S-adenosyl-L-methionine from L-methionine: step 1/1. Catalyzes the formation of S-adenosylmethionine (AdoMet) from methionine and ATP. The overall synthetic reaction is composed of two sequential steps, AdoMet formation and the subsequent tripolyphosphate hydrolysis which occurs prior to release of AdoMet from the enzyme. This Bifidobacterium longum (strain NCC 2705) protein is S-adenosylmethionine synthase.